The chain runs to 422 residues: Solanesyl diphosphate synthase 3, chloroplastic/mitochondrial (422 aa).

The transit peptide at 1–32 (MLFTRSVARISSKFLRNRSFYGSSQSLASHRF) directs the protein to the chloroplast and mitochondrion. Lysine 125, arginine 128, and histidine 174 together coordinate isopentenyl diphosphate. Mg(2+)-binding residues include aspartate 181 and aspartate 185. An an all-trans-polyprenyl diphosphate-binding site is contributed by arginine 190. Arginine 191 contacts isopentenyl diphosphate. 4 residues coordinate an all-trans-polyprenyl diphosphate: lysine 267, threonine 268, glutamine 305, and lysine 322.

Belongs to the FPP/GGPP synthase family. As to quaternary structure, homodimer. Mg(2+) serves as cofactor. In terms of tissue distribution, ubiquitous. Highest expression in seeds and shoot apical meristem.

The protein resides in the plastid. It localises to the chloroplast. The protein localises to the mitochondrion. It catalyses the reaction 5 isopentenyl diphosphate + (2E,6E,10E)-geranylgeranyl diphosphate = all-trans-nonaprenyl diphosphate + 5 diphosphate. May be involved in the supply of solanesyl diphosphate for ubiquinone-9 (UQ-9) biosynthesis in mitochondria. Synthesizes C25 to C45 medium / long-chain products depending on the type of substrate available. Can use geranyl diphosphate, farnesyl diphosphate or geranylgeranyl diphosphate as substrates, but not dimethylallyl diphosphate. This is Solanesyl diphosphate synthase 3, chloroplastic/mitochondrial from Arabidopsis thaliana (Mouse-ear cress).